The chain runs to 132 residues: MHETDMTRALIQTLRDWWQSQPGQPQIARVHLVVGQFTCVEPASLTFAYAAQTQGTFLQGSQLVIRETPLIAYCHPCGQEYKPEIGRRYACPNCGSPMEEIRSGRELKIDYIEIDYIECSTNFTPPAQPEVA.

His2 contributes to the Ni(2+) binding site. Zn(2+) contacts are provided by Cys74, Cys77, Cys91, and Cys94.

Belongs to the HypA/HybF family.

In terms of biological role, involved in the maturation of [NiFe] hydrogenases. Required for nickel insertion into the metal center of the hydrogenase. In Synechococcus sp. (strain JA-2-3B'a(2-13)) (Cyanobacteria bacterium Yellowstone B-Prime), this protein is Hydrogenase maturation factor HypA.